Consider the following 250-residue polypeptide: Nuclear transcription factor Y subunit C-4 (250 aa).

Positions 1–10 (MDNNNNNNNQ) are enriched in low complexity. Disordered regions lie at residues 1–35 (MDNNNNNNNQQPPPTSVYPPGSAVTTVIPPPPSGS) and 209–250 (GVYA…DSQG). Residues 214 to 225 (PPSQAWQSVWQN) show a composition bias toward polar residues. The span at 227-242 (AGGGDDVSYGSGGSSG) shows a compositional bias: gly residues.

This sequence belongs to the NFYC/HAP5 subunit family. As to quaternary structure, heterotrimeric transcription factor composed of three components, NF-YA, NF-YB and NF-YC. NF-YB and NF-YC must interact and dimerize for NF-YA association and DNA binding. Ubiquitous. Present in etiolated seedlings.

It is found in the nucleus. Stimulates the transcription of various genes by recognizing and binding to a CCAAT motif in promoters. Involved in the abscisic acid (ABA) signaling pathway. The sequence is that of Nuclear transcription factor Y subunit C-4 (NFYC4) from Arabidopsis thaliana (Mouse-ear cress).